A 119-amino-acid chain; its full sequence is Membrane-anchored ubiquitin-fold protein 6 (119 aa).

Residues 8–76 (IELKFRLADG…NNRTLAESRL (69 aa)) enclose the Ubiquitin-like domain. A lipid anchor (S-palmitoyl cysteine) is attached at cysteine 114. Position 116 is a cysteine methyl ester (cysteine 116). Cysteine 116 is lipidated: S-geranylgeranyl cysteine. A propeptide spans 117–119 (TIL) (removed in mature form).

Ubiquitous.

Its subcellular location is the cell membrane. Functionally, may serve as docking site to facilitate the association of other proteins to the plasma membrane. This Arabidopsis thaliana (Mouse-ear cress) protein is Membrane-anchored ubiquitin-fold protein 6 (MUB6).